A 616-amino-acid polypeptide reads, in one-letter code: Chaperone protein HscA (616 aa).

Belongs to the heat shock protein 70 family.

Chaperone involved in the maturation of iron-sulfur cluster-containing proteins. Has a low intrinsic ATPase activity which is markedly stimulated by HscB. Involved in the maturation of IscU. The polypeptide is Chaperone protein HscA (Proteus mirabilis (strain HI4320)).